The chain runs to 272 residues: uncharacterized protein (272 aa).

Residues 1-22 (MEYIKKIALYMSVLLLIIFIGG) form the signal peptide. Cys23 carries the N-palmitoyl cysteine lipid modification. Cys23 is lipidated: S-diacylglycerol cysteine.

The protein belongs to the staphylococcal tandem lipoprotein family.

It is found in the cell membrane. This is an uncharacterized protein from Staphylococcus aureus (strain MRSA252).